The primary structure comprises 586 residues: Guanylate-binding protein 5 (586 aa).

The NLRP3-binding stretch occupies residues Met-1–Asp-306. Residues Met-1 to Cys-309 are GTPase domain (Globular). One can recognise a GB1/RHD3-type G domain in the interval Thr-35–Met-276. Residues Gly-45–Ser-52, Val-67–Ser-69, Arg-181–Asp-182, and Leu-245 each bind GTP. The segment at Met-529–Leu-586 is required for tetramerization, but not for dimerization. The residue at position 583 (Cys-583) is a Cysteine methyl ester. Cys-583 is lipidated: S-geranylgeranyl cysteine. Positions Val-584–Leu-586 are cleaved as a propeptide — removed in mature form.

It belongs to the TRAFAC class dynamin-like GTPase superfamily. GB1/RHD3 GTPase family. GB1 subfamily. As to quaternary structure, homodimer; homodimerizes upon GTP-binding, forming a close face-to-face dimer. Heterodimer with other family members, including GBP1, GBP2, GBP3 and GBP4. May also form tetramers (dimer of dimers) in the presence of GTP. Interacts with NLRP3, possibly in its tetrameric form, and promotes PYCARD/ASC polymerization. Homodimer; homodimerizes upon GTP-binding. GDP-bound form remains homodimeric. In terms of assembly, homodimer; homodimerizes upon GTP-binding. GDP-bound is monomeric. In terms of processing, isoprenylation is required for proper subcellular location. Expressed in peripheral blood monocytes (at protein level).

It localises to the cytoplasmic vesicle membrane. Its subcellular location is the golgi apparatus membrane. It is found in the cytoplasm. It carries out the reaction GTP + H2O = GDP + phosphate + H(+). Interferon (IFN)-inducible GTPase that plays important roles in innate immunity against a diverse range of bacterial, viral and protozoan pathogens. Hydrolyzes GTP, but in contrast to other family members, does not produce GMP. Following infection, recruited to the pathogen-containing vacuoles or vacuole-escaped bacteria and acts as a positive regulator of inflammasome assembly by promoting the release of inflammasome ligands from bacteria. Acts by promoting lysis of pathogen-containing vacuoles, releasing pathogens into the cytosol. Following pathogen release in the cytosol, promotes recruitment of proteins that mediate bacterial cytolysis: this liberates ligands that are detected by inflammasomes, such as lipopolysaccharide (LPS) that activates the non-canonical CASP4/CASP11 inflammasome or double-stranded DNA (dsDNA) that activates the AIM2 inflammasome. As an activator of NLRP3 inflammasome assembly: promotes selective NLRP3 inflammasome assembly in response to microbial and soluble, but not crystalline, agents. Independently of its GTPase activity, acts as an inhibitor of various viruses infectivity, such as HIV-1, Zika and influenza A viruses, by inhibiting FURIN-mediated maturation of viral envelope proteins. Functionally, antigenic tumor-specific truncated splice form. This Homo sapiens (Human) protein is Guanylate-binding protein 5.